The primary structure comprises 28 residues: fur leader peptide (28 aa).

Cotranscribed with fur, it is essential for fur translation. The fur ribosomal binding site (RBS) is occluded by the 5'-mRNA secondary structure, which is opened by uof translation. The polypeptide is fur leader peptide (uof) (Escherichia coli (strain K12)).